A 428-amino-acid chain; its full sequence is tRNA(Ile2) 2-agmatinylcytidine synthetase TiaS (428 aa).

It belongs to the TiaS family.

The protein resides in the cytoplasm. It catalyses the reaction cytidine(34) in tRNA(Ile2) + agmatine + ATP + H2O = 2-agmatinylcytidine(34) in tRNA(Ile2) + AMP + 2 phosphate + 2 H(+). ATP-dependent agmatine transferase that catalyzes the formation of 2-agmatinylcytidine (agm2C) at the wobble position (C34) of tRNA(Ile2), converting the codon specificity from AUG to AUA. The sequence is that of tRNA(Ile2) 2-agmatinylcytidine synthetase TiaS from Methanosarcina acetivorans (strain ATCC 35395 / DSM 2834 / JCM 12185 / C2A).